We begin with the raw amino-acid sequence, 142 residues long: Hemoglobin subunit beta-C (142 aa).

A Globin domain is found at 2 to 142 (PNKALITGFW…VASALAHRYH (141 aa)). Residues His-59 and His-88 each coordinate heme b.

The protein belongs to the globin family. Heterotetramer of two alpha chains and two beta chains. Red blood cells.

Involved in oxygen transport from the lung to the various peripheral tissues. The protein is Hemoglobin subunit beta-C (HBBC) of Ovis aries (Sheep).